Consider the following 81-residue polypeptide: Large ribosomal subunit protein bL31B (81 aa).

This sequence belongs to the bacterial ribosomal protein bL31 family. Type B subfamily. In terms of assembly, part of the 50S ribosomal subunit.

The sequence is that of Large ribosomal subunit protein bL31B from Borrelia garinii subsp. bavariensis (strain ATCC BAA-2496 / DSM 23469 / PBi) (Borreliella bavariensis).